The following is a 92-amino-acid chain: Probable Fe(2+)-trafficking protein (92 aa).

The protein belongs to the Fe(2+)-trafficking protein family.

Functionally, could be a mediator in iron transactions between iron acquisition and iron-requiring processes, such as synthesis and/or repair of Fe-S clusters in biosynthetic enzymes. The polypeptide is Probable Fe(2+)-trafficking protein (Shewanella baltica (strain OS223)).